A 446-amino-acid chain; its full sequence is NADH-quinone oxidoreductase subunit D (446 aa).

Belongs to the complex I 49 kDa subunit family. In terms of assembly, NDH-1 is composed of 14 different subunits. Subunits NuoB, C, D, E, F, and G constitute the peripheral sector of the complex.

Its subcellular location is the cell membrane. The catalysed reaction is a quinone + NADH + 5 H(+)(in) = a quinol + NAD(+) + 4 H(+)(out). In terms of biological role, NDH-1 shuttles electrons from NADH, via FMN and iron-sulfur (Fe-S) centers, to quinones in the respiratory chain. The immediate electron acceptor for the enzyme in this species is believed to be a menaquinone. Couples the redox reaction to proton translocation (for every two electrons transferred, four hydrogen ions are translocated across the cytoplasmic membrane), and thus conserves the redox energy in a proton gradient. The chain is NADH-quinone oxidoreductase subunit D from Mycobacterium sp. (strain JLS).